Consider the following 456-residue polypeptide: Solute carrier family 49 member 4 homolog (456 aa).

Residues 1–29 lie on the Cytoplasmic side of the membrane; that stretch reads MGLEWSSPGERQPLLYPGGPRAPRVFGRR. Positions 14–15 match the Di-leucine motif; mediates lysosomal localization motif; it reads LL. A helical transmembrane segment spans residues 30 to 50; that stretch reads WLVLLLFSLLAFLQGLVWNSW. Residues 51–67 are Lumenal-facing; sequence GPIQNSARTAYNFSGLD. N-linked (GlcNAc...) asparagine glycosylation occurs at Asn62. Residues 68-88 form a helical membrane-spanning segment; the sequence is IALLVLWGPIGFLPCFLFMWL. Topologically, residues 89-95 are cytoplasmic; it reads MDNRGLR. A helical transmembrane segment spans residues 96–116; that stretch reads VTVLLTALLMVLGAGLRCVPV. At 117–131 the chain is on the lumenal side; the sequence is QDLAVRRKLIHGGQL. Residues 132 to 152 traverse the membrane as a helical segment; sequence LNGFAGPTVMNAAPFLSTTWF. The Cytoplasmic portion of the chain corresponds to 153–162; it reads SPDERATATA. A helical membrane pass occupies residues 163 to 183; the sequence is IASMLSYLGGACAFLVGPLVV. At 184-207 the chain is on the lumenal side; the sequence is PAPNSTSGLLLYSGSVGAIRDRIE. A glycan (N-linked (GlcNAc...) asparagine) is linked at Asn187. The helical transmembrane segment at 208 to 228 threads the bilayer; that stretch reads AVMYAEFGIIFVVFAAILAYF. Topologically, residues 229–259 are cytoplasmic; sequence PSRPPVPPSVAAASRRLSYRTSILRLLSNVR. A helical transmembrane segment spans residues 260–280; that stretch reads FLLIVLAYAIPLGFYAGWSGV. Residues 281-292 lie on the Lumenal side of the membrane; that stretch reads LDLILTPVHVTQ. Residues 293-313 form a helical membrane-spanning segment; sequence VDAGWVGFWSIVGGCVVGIAV. Over 314–326 the chain is Cytoplasmic; it reads GRFADSIRGVLKP. The chain crosses the membrane as a helical span at residues 327–347; that stretch reads ILLLLFSGAALSSTWFTLTFL. Residues 348 to 362 are Lumenal-facing; that stretch reads SNVTHLPLTTATLYT. N-linked (GlcNAc...) asparagine glycosylation is present at Asn349. A helical membrane pass occupies residues 363–383; it reads SCILIGVFLSGTVPIFFEMFV. Residues 384–392 lie on the Cytoplasmic side of the membrane; that stretch reads ETVYPIPEG. Residues 393-413 form a helical membrane-spanning segment; it reads ITCGVVTFLSNLFMGVLLLFL. At 414–420 the chain is on the lumenal side; the sequence is TLYQTNL. Residue Asn419 is glycosylated (N-linked (GlcNAc...) asparagine). A helical membrane pass occupies residues 421–441; sequence SWLNWCLTGSCFLSLLFIACF. At 442-456 the chain is on the cytoplasmic side; the sequence is RESYDRLYLDVFVSV.

This sequence belongs to the major facilitator superfamily.

The protein resides in the lysosome membrane. It catalyses the reaction pyridoxine(out) + n H(+)(out) = pyridoxine(in) + n H(+)(in). Its function is as follows. Mediates H(+)-dependent pyridoxine transport. This is Solute carrier family 49 member 4 homolog (slc49a4) from Xenopus tropicalis (Western clawed frog).